Reading from the N-terminus, the 430-residue chain is Serine carboxypeptidase-like 13 (430 aa).

A signal peptide spans 1–22 (MSLTLEFLLLLIVLILSHHAHS). Disulfide bonds link Cys81/Cys319, Cys240/Cys254, and Cys278/Cys285. Residue Asn102 is glycosylated (N-linked (GlcNAc...) asparagine). Ser177 is an active-site residue. N-linked (GlcNAc...) asparagine glycosylation is found at Asn299 and Asn323. Residue Asp355 is part of the active site. Residue Asn371 is glycosylated (N-linked (GlcNAc...) asparagine). Residue His408 is part of the active site.

This sequence belongs to the peptidase S10 family. Expression not detected.

The protein resides in the secreted. It catalyses the reaction 2 1-O-(trans-sinapoyl)-beta-D-glucose = 1,2-di-O-sinapoyl beta-D-glucose + D-glucose. Catalyzes the formation of 1,2-bis-O-sinapoyl beta-D-glucoside. The chain is Serine carboxypeptidase-like 13 (SCPL13) from Arabidopsis thaliana (Mouse-ear cress).